A 1291-amino-acid polypeptide reads, in one-letter code: MLDATTFDELRIGLATADDIRRWSYGEVKKPETINYRTLKPEKDGLFGEQIFGPSRDWECSCGKYKRVRFKGIVCERCGVEVTKSSVRRERMGHIELAAPVTHIWYFKGVPSRLGYLLDMAPKDLEKVIYFAAYMVIDVDEEGRHADMPGLENELRLESKTLSDQRDARVAERLQRLETDLAALEEEGAKADQKRRVKDTAEKEMGQLRKSFDEDIARLERVWESFRTLKVGDLKPEDADFNELLDRFGLYFEAFMGAEAIKRRLQAFDLNQEAELLREQIATGKGQKKIRAIKRLRVVSSFLATGNSPAAMVLDVVPVIPPELRPMVQLDGGRFATSDLNDLYRRVINRNNRLRRLLDLGAPEIIVNNEKRMLQEAVDALFDNGRRGRPVTGTGNRALKSLSDMLKGKQGRFRQNLLGKRVDYSGRSVIIVGPQLKLHQCGLPKQMALELFKPFVIKRLIDLSHAQNIKAAKRMVERSRPQVWDVLEEIIRERPVLLNRAPTLHRLGIQAFEPQLVEGKAIQLHPLVCAAFNADFDGDQMAVHLPLSVEAQAEARILMLASNNILKPSDGRPVTLPSQDMIIGLHHLTTVREGAEGEGRAFASVSEAIMAKDQGSLHLNATIKIRLDNYVPSDAADTGTEPVTAVVETTLGRALFNEALPVDYPYVEAVADKGQISAIVNALAERYPKVEVAAALDRIKDAGFYWGTRSGVTVSLSDILTPPNKPQIVAGYEKKAAKINSEFEKGLTTDLERRQELVKIWTEATNEVAEAMSANFPADNTINRMVTSGARGNWLQVRNIAGMRGLVNNPKGEIIPRPIISSYREGLSVAEYFIATHGARKGLADTALRTADSGYLTRRLVDVSQDVIIREDDCGTTKGLDLPIATVDAEGVLTRDPNVENSVFARTLAADAVGTDGTVVAKAGEDVGDVLIDKLVAAGVVDIKVRSVLTCESAVGVCAACYGRSLATGKLVDIGEAVGIIAAQSIGEPGTQLTMRTFHTGGSASADDITQGLPRVQELFEARTPKGASPIAEAAGRIVIEETDKSRKVILTPDNGDEPHVYPVLKRSTLLVEDRQQVELGQQLIVGTVDPKEVLRVKGVREVQKHLVGGVQGVYRSQGVPIHDKHIEVIVRQMLRKVTVVDHGDTDLLPGELVDRSRYNEINRGALQEGKKTASARQEVMGITKASLATESWLSAASFQETTRVLTQAAMEGKSDPLIGLKENVIIGKLIPAGTGLSRYRNVSVEATEEAKAERYPNRIFADDSAFSENDLSFVDFDSFSSDDYTPGTYN.

Zn(2+)-binding residues include Cys60, Cys62, Cys75, and Cys78. Asp535, Asp537, and Asp539 together coordinate Mg(2+). Zn(2+) contacts are provided by Cys874, Cys951, Cys958, and Cys961.

It belongs to the RNA polymerase beta' chain family. The RNAP catalytic core consists of 2 alpha, 1 beta, 1 beta' and 1 omega subunit. When a sigma factor is associated with the core the holoenzyme is formed, which can initiate transcription. The cofactor is Mg(2+). It depends on Zn(2+) as a cofactor.

The enzyme catalyses RNA(n) + a ribonucleoside 5'-triphosphate = RNA(n+1) + diphosphate. In terms of biological role, DNA-dependent RNA polymerase catalyzes the transcription of DNA into RNA using the four ribonucleoside triphosphates as substrates. This Leifsonia xyli subsp. xyli (strain CTCB07) protein is DNA-directed RNA polymerase subunit beta'.